The following is a 267-amino-acid chain: L-aspartate dehydrogenase (267 aa).

Residues Ala124 and Asn190 each coordinate NAD(+). Residue His218 is part of the active site.

This sequence belongs to the L-aspartate dehydrogenase family.

It catalyses the reaction L-aspartate + NADP(+) + H2O = oxaloacetate + NH4(+) + NADPH + H(+). It carries out the reaction L-aspartate + NAD(+) + H2O = oxaloacetate + NH4(+) + NADH + H(+). It functions in the pathway cofactor biosynthesis; NAD(+) biosynthesis; iminoaspartate from L-aspartate (dehydrogenase route): step 1/1. In terms of biological role, specifically catalyzes the NAD or NADP-dependent dehydrogenation of L-aspartate to iminoaspartate. This Methanococcus maripaludis (strain C7 / ATCC BAA-1331) protein is L-aspartate dehydrogenase.